Reading from the N-terminus, the 35-residue chain is Cupiennin-2b (35 aa).

A Glutamine amide modification is found at Gln-35.

In terms of tissue distribution, expressed by the venom gland.

The protein resides in the secreted. The protein is Cupiennin-2b of Cupiennius salei (American wandering spider).